The primary structure comprises 193 residues: Bradykinin-potentiating and C-type natriuretic peptides (193 aa).

An N-terminal signal peptide occupies residues 1-23; sequence MFVSRLAASGLLLLALLALSLDG. A propeptide spanning residues 24–27 is cleaved from the precursor; it reads KPVH. Residues 25–173 are disordered; it reads PVHQSKPGRS…RMKGLAKKAM (149 aa). At Q28 the chain carries Pyrrolidone carboxylic acid. 2 consecutive propeptides follow at residues 40–43 and 58–64; these read LSAQ and LSVQQWS. The residue at position 65 (Q65) is a Pyrrolidone carboxylic acid. Residues 75–169 constitute a propeptide that is removed on maturation; sequence VVVQPHESPA…GGARRMKGLA (95 aa). The span at 95-123 shows a compositional bias: low complexity; it reads SPGPEAASGPAAPHRLPKSKGASATSAAS. Over residues 125-150 the composition is skewed to basic and acidic residues; sequence PMRDLRTDGKQERQKWGRMVQPDHHA. The span at 152 to 162 shows a compositional bias: gly residues; the sequence is PGGGGGGGGGA. Positions 163 to 173 are enriched in basic residues; it reads RRMKGLAKKAM. C177 and C193 are joined by a disulfide.

In the N-terminal section; belongs to the bradykinin-potentiating peptide family. This sequence in the C-terminal section; belongs to the natriuretic peptide family. In terms of tissue distribution, expressed by the venom gland.

Its subcellular location is the secreted. Functionally, bradykinin-potentiating peptide both inhibits the activity of the angiotensin-converting enzyme (ACE) and enhances the action of bradykinin by inhibiting the peptidases that inactivate it. It acts as an indirect hypotensive agent. Neither synthetic Tf1, nor synthetic Tf2 show bradykinin-potentiating effects. Has a vasorelaxant activity in rat aortic strips and a diuretic potency in anesthetized rats. In terms of biological role, has a vasorelaxant activity in rat aortic strips and a diuretic potency in anesthetized rats. Is as potent as Tf-CNP. This Protobothrops flavoviridis (Habu) protein is Bradykinin-potentiating and C-type natriuretic peptides.